Consider the following 474-residue polypeptide: Protein CyaE (474 aa).

The first 31 residues, M1–A31, serve as a signal peptide directing secretion.

Belongs to the outer membrane factor (OMF) (TC 1.B.17) family.

The protein localises to the cell outer membrane. CyaE is necessary for transport of calmodulin-sensitive adenylate cyclase-hemolysin (cyclolysin). This Bordetella pertussis (strain Tohama I / ATCC BAA-589 / NCTC 13251) protein is Protein CyaE (cyaE).